Consider the following 94-residue polypeptide: Putative pterin-4-alpha-carbinolamine dehydratase (94 aa).

The protein belongs to the pterin-4-alpha-carbinolamine dehydratase family.

The catalysed reaction is (4aS,6R)-4a-hydroxy-L-erythro-5,6,7,8-tetrahydrobiopterin = (6R)-L-erythro-6,7-dihydrobiopterin + H2O. This is Putative pterin-4-alpha-carbinolamine dehydratase from Mycobacterium leprae (strain Br4923).